Consider the following 447-residue polypeptide: Methionine aminopeptidase 2 (447 aa).

The tract at residues 1–86 (MAGATEGEDT…KNKKKKKKKI (86 aa)) is disordered. Positions 8 to 32 (EDTKVIESKINELNIDKPKLEDNNE) are enriched in basic and acidic residues. The segment covering 43–60 (GGDDDDDKEDDDDNDEIT) has biased composition (acidic residues). Residues 71–86 (KKKKKNKNKKKKKKKI) are compositionally biased toward basic residues. Substrate is bound at residue His-198. 3 residues coordinate a divalent metal cation: Asp-218, Asp-229, and His-300. His-308 lines the substrate pocket. Residues Glu-333 and Glu-428 each contribute to the a divalent metal cation site.

Belongs to the peptidase M24A family. Methionine aminopeptidase eukaryotic type 2 subfamily. Requires Co(2+) as cofactor. It depends on Zn(2+) as a cofactor. The cofactor is Mn(2+). Fe(2+) is required as a cofactor.

The protein localises to the cytoplasm. The catalysed reaction is Release of N-terminal amino acids, preferentially methionine, from peptides and arylamides.. Its function is as follows. Cotranslationally removes the N-terminal methionine from nascent proteins. The N-terminal methionine is often cleaved when the second residue in the primary sequence is small and uncharged (Met-Ala-, Cys, Gly, Pro, Ser, Thr, or Val). In Candida albicans (strain WO-1) (Yeast), this protein is Methionine aminopeptidase 2.